The primary structure comprises 142 residues: Cytochrome b5-related protein (142 aa).

In terms of domain architecture, Cytochrome b5 heme-binding spans 16-100 (PTYRNSAPVT…IAKYKVRDAY (85 aa)). Residues His59 and His82 each coordinate heme.

This sequence belongs to the cytochrome b5 family.

Its function is as follows. May play a role in muscle cell metabolism. The polypeptide is Cytochrome b5-related protein (Cyt-b5-r) (Drosophila virilis (Fruit fly)).